The primary structure comprises 469 residues: uncharacterized protein (469 aa).

Disordered regions lie at residues 248–314 (RDDN…EPES) and 327–418 (QMDQ…PRPT). Composition is skewed to polar residues over residues 292–305 (ESSN…NAAS) and 350–365 (TARQ…PNTV). Low complexity predominate over residues 366–377 (TATSASTPASTS).

This is an uncharacterized protein from Cryphonectria parasitica (Chestnut blight fungus).